Reading from the N-terminus, the 7913-residue chain is Nonribosomal peptide synthetase dtxS1 (7913 aa).

Residues 263 to 662 (FEQRSRAHPN…GRNDNQVKIR (400 aa)) form an adenylation 1 region. In terms of domain architecture, Carrier 1 spans 789-865 (QPLSEVEKQV…NVAGQARRTT (77 aa)). O-(pantetheine 4'-phosphoryl)serine is present on S826. Positions 903 to 1171 (QDAFPCTSLQ…ITTVPVRIRL (269 aa)) are condensation 1. An adenylation 2 region spans residues 1332 to 1740 (LETQAHSRPD…GRKDAQVKIR (409 aa)). Residues 1865-1941 (QPRTKLERQL…NLAQATGTQG (77 aa)) enclose the Carrier 2 domain. Position 1902 is an O-(pantetheine 4'-phosphoryl)serine (S1902). Residues 1965–2249 (PAQLSPIQRL…FSTIFPVRVS (285 aa)) form a condensation 2 region. Residues 2863 to 3255 (LAQPHEPAIC…ARKDAQIKIR (393 aa)) are adenylation 3. The region spanning 3380 to 3456 (QPLSEAERKM…NVTHQAVAQL (77 aa)) is the Carrier 3 domain. Residue S3417 is modified to O-(pantetheine 4'-phosphoryl)serine. The tract at residues 3496-3761 (DAFPCTPLQE…FATLPLRVRL (266 aa)) is condensation 3. The segment at 3924 to 4321 (DRVRIHPNAP…GRKDDQVKLR (398 aa)) is adenylation 4. Polar residues predominate over residues 4439–4450 (ELAQARTAQQGP). Positions 4439–4459 (ELAQARTAQQGPKRQPASEAE) are disordered. A Carrier 4 domain is found at 4453–4529 (QPASEAERQM…EAATQAQMLG (77 aa)). S4490 is subject to O-(pantetheine 4'-phosphoryl)serine. The condensation 4 stretch occupies residues 4545–4837 (QSFAQARLWF…VNMQCLRVKI (293 aa)). Residues 5006 to 5405 (FRQQVAACAD…RRMDAQVKIR (400 aa)) are adenylation 5. Residues 5933–6009 (QPTSKTQRQL…DMAEGLPLAK (77 aa)) enclose the Carrier 5 domain. S5970 carries the O-(pantetheine 4'-phosphoryl)serine modification. The segment at 6023-6315 (VEQSFAQRRL…VNMQCIRIRV (293 aa)) is condensation 5. Positions 6481 to 6766 (FRQQALLNPD…IINAYGPTEN (286 aa)) are adenylation 6. One can recognise a Carrier 6 domain in the interval 7394–7470 (QPTTDMEREM…DLACHLSPEE (77 aa)). An O-(pantetheine 4'-phosphoryl)serine modification is found at S7431. The condensation 6 stretch occupies residues 7501-7771 (EDVLPLTSFQ…CLNIVPIRVN (271 aa)).

The protein belongs to the NRP synthetase family.

It participates in secondary metabolite biosynthesis. Nonribosomal peptide synthetase; part of the gene cluster that mediates the biosynthesis of destruxins, insecticidal cyclic hexadepsipeptides which induce flaccid paralysis and visceral muscle contraction in insects through targeting the calcium channels and vacuolar-type ATPases. The aldo-keto reductase dtxS3 converts alpha-ketoisocaproic acid from deaminated leucine into alpha-hydroxyisocaproic acid (HIC), which is the first substrate for destruxin assembly by dtxS1. L-aspartate decarboxylase dtxS4 converts aspartic acid into beta-alanine, the last substrate for the destruxin assembly line performed by dtxS1. The nonribosomal peptide synthetase dtxS1 synthesizes destruxins B and B2, whereas the cytochrome P450 monooxygenase dtxS2 is required to convert destruxin B into other destruxin derivatives, including destructins C, D, A and E. Destruxin E-diol (ED) is further produced in a non-enzymatic manner from destruxin E. Destruxins play an important role in virulence and escape from insect host immune defenses. The chain is Nonribosomal peptide synthetase dtxS1 from Metarhizium robertsii (strain ARSEF 23 / ATCC MYA-3075) (Metarhizium anisopliae (strain ARSEF 23)).